Reading from the N-terminus, the 736-residue chain is Subtilisin-like protease SBT4.12 (736 aa).

Positions 1–24 (MANLAASTCLYSWLLVLLLSSVSA) are cleaved as a signal peptide. Residues 25 to 110 (IIDEDTQVYI…VFPNKILQLH (86 aa)) constitute a propeptide, activation peptide. The Inhibitor I9 domain maps to 32–110 (VYIVYMGSLS…VFPNKILQLH (79 aa)). Residues 114–580 (SWDFMGVKEG…AGHVDPMAAL (467 aa)) form the Peptidase S8 domain. Aspartate 142 serves as the catalytic Charge relay system. Asparagine 173 carries N-linked (GlcNAc...) asparagine glycosylation. The Charge relay system role is filled by histidine 197. 3 N-linked (GlcNAc...) asparagine glycosylation sites follow: asparagine 220, asparagine 381, and asparagine 459. The 85-residue stretch at 353–437 (KYPLVYGKSA…GLKAKDFKSL (85 aa)) folds into the PA domain. Catalysis depends on serine 519, which acts as the Charge relay system. Residues asparagine 601, asparagine 649, and asparagine 659 are each glycosylated (N-linked (GlcNAc...) asparagine).

It belongs to the peptidase S8 family. The C-terminal propeptide is autocleaved. As to expression, specifically expressed in root stele of the root hair zone.

It localises to the secreted. The polypeptide is Subtilisin-like protease SBT4.12 (Arabidopsis thaliana (Mouse-ear cress)).